The chain runs to 142 residues: ATP synthase epsilon chain (142 aa).

It belongs to the ATPase epsilon chain family. F-type ATPases have 2 components, CF(1) - the catalytic core - and CF(0) - the membrane proton channel. CF(1) has five subunits: alpha(3), beta(3), gamma(1), delta(1), epsilon(1). CF(0) has three main subunits: a, b and c.

It is found in the cell inner membrane. Produces ATP from ADP in the presence of a proton gradient across the membrane. The polypeptide is ATP synthase epsilon chain (Shewanella sediminis (strain HAW-EB3)).